Here is a 264-residue protein sequence, read N- to C-terminus: Na(+)-translocating NADH-quinone reductase subunit E (264 aa).

6 helical membrane-spanning segments follow: residues 11 to 31 (VFGIFLQATFIQNILLSNFLG), 50 to 70 (MSVALVLTVTGSINWVVHTFI), 90 to 110 (FLELIIFIVVIAAFTQILELL), 123 to 143 (GIFLPLIAVNCAILGGVLFGI), 149 to 169 (FIPMMIFSLGAGCGWWLAIVL), and 189 to 209 (MGISFITTGLIAMAFMSLTGI).

The protein belongs to the NqrDE/RnfAE family. In terms of assembly, composed of six subunits; NqrA, NqrB, NqrC, NqrD, NqrE and NqrF.

The protein localises to the cell inner membrane. It catalyses the reaction a ubiquinone + n Na(+)(in) + NADH + H(+) = a ubiquinol + n Na(+)(out) + NAD(+). In terms of biological role, NQR complex catalyzes the reduction of ubiquinone-1 to ubiquinol by two successive reactions, coupled with the transport of Na(+) ions from the cytoplasm to the periplasm. NqrA to NqrE are probably involved in the second step, the conversion of ubisemiquinone to ubiquinol. The polypeptide is Na(+)-translocating NADH-quinone reductase subunit E (Chlamydia caviae (strain ATCC VR-813 / DSM 19441 / 03DC25 / GPIC) (Chlamydophila caviae)).